We begin with the raw amino-acid sequence, 782 residues long: DNA repair and recombination protein RAD54-like (782 aa).

The segment covering 1–20 (MRRSLAPSQRGGQRLSSRND) has biased composition (polar residues). Residues 1–28 (MRRSLAPSQRGGQRLSSRNDFTPPLLKK) are disordered. Residues 2–9 (RRSLAPSQ) are required for chromatin remodeling, strand pairing activities and coupling of ATPase activity. Residue T22 is modified to Phosphothreonine. The Helicase ATP-binding domain maps to 168 to 343 (EGKRGNFNGC…FSLVNFVNPE (176 aa)). 181–188 (DEMGLGKT) lines the ATP pocket. Residues 294–297 (DEGH) carry the DEGH box motif. Residues 501 to 658 (LLDFMLAAIR…NNESAEKHFT (158 aa)) form the Helicase C-terminal domain. The span at 741-753 (SQKIEATPATETS) shows a compositional bias: polar residues. Positions 741 to 782 (SQKIEATPATETSVEAKLEPERRKRPAMPLSDDSADEDFQGF) are disordered. Positions 773–782 (DSADEDFQGF) are enriched in acidic residues.

It belongs to the SNF2/RAD54 helicase family. Interacts (via N-terminus) with spn-A/Rad51.

It localises to the nucleus. Its function is as follows. Involved in mitotic DNA repair and meiotic recombination. Functions in the recombinational DNA repair pathway. Essential for interhomolog gene conversion (GC), but may have a less important role in intersister GC than spn-A/Rad51. In the presence of DNA, spn-A/Rad51 enhances the ATPase activity of okr/Rad54. The protein is DNA repair and recombination protein RAD54-like of Drosophila persimilis (Fruit fly).